The following is a 370-amino-acid chain: Proto-oncogene Wnt-1 (370 aa).

The signal sequence occupies residues 1–27; the sequence is MGLWALLPSWVSTTLLLALTALPAALA. N-linked (GlcNAc...) asparagine glycosylation occurs at Asn-29. 11 disulfides stabilise this stretch: Cys-93-Cys-104, Cys-143-Cys-151, Cys-153-Cys-170, Cys-218-Cys-232, Cys-220-Cys-227, Cys-299-Cys-330, Cys-315-Cys-325, Cys-329-Cys-369, Cys-345-Cys-360, Cys-347-Cys-357, and Cys-352-Cys-353. Residue Ser-224 is the site of O-palmitoleoyl serine; by PORCN attachment. Residues Asn-316 and Asn-346 are each glycosylated (N-linked (GlcNAc...) asparagine). A glycan (N-linked (GlcNAc...) asparagine) is linked at Asn-359.

It belongs to the Wnt family. In terms of assembly, forms a soluble 1:1 complex with AFM; this prevents oligomerization and is required for prolonged biological activity. The complex with AFM may represent the physiological form in body fluids. Interacts with PORCN. Interacts with RSPO1, RSPO2 and RSPO3. Interacts with WLS. Post-translationally, palmitoleoylation is required for efficient binding to frizzled receptors. Palmitoleoylation is necessary for proper trafficking to cell surface. Depalmitoleoylated by NOTUM, leading to inhibit Wnt signaling pathway. As to expression, testis and mid-gestational embryos. In the testis, detected only in postmeiotic germ cells undergoing differentiation from round spermatids into mature spermatozoa. In the embryos, expression is restricted to the developing CNS in regions of the neural tube other than the telencephalon. Expressed in osteoblast; expression levels increase with advancing osteoblast differentiation. Expressed in the brain, femur, spleen, and hematopoietic bone marrow.

It localises to the secreted. It is found in the extracellular space. The protein localises to the extracellular matrix. Its function is as follows. Ligand for members of the frizzled family of seven transmembrane receptors. Acts in the canonical Wnt signaling pathway by promoting beta-catenin-dependent transcriptional activation. In some developmental processes, is also a ligand for the coreceptor RYK, thus triggering Wnt signaling. Plays an essential role in the development of the embryonic brain and central nervous system (CNS). Has a role in osteoblast function, bone development and bone homeostasis. The sequence is that of Proto-oncogene Wnt-1 (Wnt1) from Mus musculus (Mouse).